Consider the following 824-residue polypeptide: Neuronal PAS domain-containing protein 2 (824 aa).

The segment covering 1-10 has biased composition (basic and acidic residues); it reads MDEDEKDRAK. Residues 1–21 are disordered; it reads MDEDEKDRAKRASRNKSEKKR. The interval 1-61 is sufficient for heterodimer formation with BMAL1, E-box binding and for the effect of NADPH; sequence MDEDEKDRAK…VIGFLQKHNE (61 aa). Residues 9–59 enclose the bHLH domain; the sequence is AKRASRNKSEKKRRDQFNVLIKELSSMLPGNTRKMDKTTVLEKVIGFLQKH. A PAS 1 domain is found at 82–152; that stretch reads NEEFTQLMLE…KILSSHMLVT (71 aa). Positions 119 and 171 each coordinate heme b. The 71-residue stretch at 237–307 folds into the PAS 2 domain; the sequence is FLKEMCIVDE…RCHQHLMQFG (71 aa). A PAC domain is found at 311 to 354; that stretch reads SCCYRFLTKGQQWIWLQTHYYITYHQWNSKPEFIVCTHSVVSYA. Disordered stretches follow at residues 367–437, 556–667, 681–704, and 739–824; these read EDPP…MAEA, SSTQ…PDFS, QPMM…RQVK, and PSFP…QPPR. Positions 378 to 390 are enriched in basic and acidic residues; the sequence is ALKDKGSSLEPRQ. The span at 421–431 shows a compositional bias: polar residues; the sequence is TAMSEPTSTPT. A compositionally biased stretch (low complexity) spans 559–576; sequence QRPEAQQQLQQRSAAVTQ. A compositionally biased stretch (polar residues) spans 587-610; sequence GQISSAQVTSQHLLRESSVISTQG. The span at 614–636 shows a compositional bias: low complexity; that stretch reads MRSSQLMQSSGRSGSSLVSPFSS. 2 stretches are compositionally biased toward polar residues: residues 645–664 and 694–704; these read LNLT…QPSP and SEVSRTGRQVK. Over residues 739 to 760 the composition is skewed to low complexity; the sequence is PSFPASQPSPLQPAQARQQPPQ. Over residues 766-789 the composition is skewed to polar residues; it reads QAPTSLHSEQQDSLLLSTYSQQPG. A compositionally biased stretch (pro residues) spans 794–805; the sequence is PQPPPAQPQPLR. Positions 809–824 are enriched in low complexity; sequence RVSSLSESSGLQQPPR.

As to quaternary structure, component of the circadian clock oscillator which includes the CRY proteins, CLOCK or NPAS2, BMAL1 or BMAL2, CSNK1D and/or CSNK1E, TIMELESS and the PER proteins. Efficient DNA binding requires dimerization with another bHLH protein. Forms a heterodimer with BMAL1 and this heterodimerization is required for E-box-dependent transactivation. Interacts with NCOA3, KAT2B, CREBBP and EP300. The cofactor is heme.

The protein localises to the nucleus. With respect to regulation, carbon monoxide (CO) and the redox state of the cell can modulate the transcriptional activity of the NPAS2-BMAL1 heterodimer. NADH and NADPH enhance the DNA-binding activity of the heterodimer whereas CO binds the heme group in NPAS2 and inhibits the DNA-binding activity of the heterodimer. Functionally, transcriptional activator which forms a core component of the circadian clock. The circadian clock, an internal time-keeping system, regulates various physiological processes through the generation of approximately 24 hour circadian rhythms in gene expression, which are translated into rhythms in metabolism and behavior. It is derived from the Latin roots 'circa' (about) and 'diem' (day) and acts as an important regulator of a wide array of physiological functions including metabolism, sleep, body temperature, blood pressure, endocrine, immune, cardiovascular, and renal function. Consists of two major components: the central clock, residing in the suprachiasmatic nucleus (SCN) of the brain, and the peripheral clocks that are present in nearly every tissue and organ system. Both the central and peripheral clocks can be reset by environmental cues, also known as Zeitgebers (German for 'timegivers'). The predominant Zeitgeber for the central clock is light, which is sensed by retina and signals directly to the SCN. The central clock entrains the peripheral clocks through neuronal and hormonal signals, body temperature and feeding-related cues, aligning all clocks with the external light/dark cycle. Circadian rhythms allow an organism to achieve temporal homeostasis with its environment at the molecular level by regulating gene expression to create a peak of protein expression once every 24 hours to control when a particular physiological process is most active with respect to the solar day. Transcription and translation of core clock components (CLOCK, NPAS2, BMAL1, BMAL2, PER1, PER2, PER3, CRY1 and CRY2) plays a critical role in rhythm generation, whereas delays imposed by post-translational modifications (PTMs) are important for determining the period (tau) of the rhythms (tau refers to the period of a rhythm and is the length, in time, of one complete cycle). A diurnal rhythm is synchronized with the day/night cycle, while the ultradian and infradian rhythms have a period shorter and longer than 24 hours, respectively. Disruptions in the circadian rhythms contribute to the pathology of cardiovascular diseases, cancer, metabolic syndromes and aging. A transcription/translation feedback loop (TTFL) forms the core of the molecular circadian clock mechanism. Transcription factors, CLOCK or NPAS2 and BMAL1 or BMAL2, form the positive limb of the feedback loop, act in the form of a heterodimer and activate the transcription of core clock genes and clock-controlled genes (involved in key metabolic processes), harboring E-box elements (5'-CACGTG-3') within their promoters. The core clock genes: PER1/2/3 and CRY1/2 which are transcriptional repressors form the negative limb of the feedback loop and interact with the CLOCK|NPAS2-BMAL1|BMAL2 heterodimer inhibiting its activity and thereby negatively regulating their own expression. This heterodimer also activates nuclear receptors NR1D1/2 and RORA/B/G, which form a second feedback loop and which activate and repress BMAL1 transcription, respectively. The NPAS2-BMAL1 heterodimer positively regulates the expression of MAOA, F7 and LDHA and modulates the circadian rhythm of daytime contrast sensitivity by regulating the rhythmic expression of adenylate cyclase type 1 (ADCY1) in the retina. NPAS2 plays an important role in sleep homeostasis and in maintaining circadian behaviors in normal light/dark and feeding conditions and in the effective synchronization of feeding behavior with scheduled food availability. Regulates the gene transcription of key metabolic pathways in the liver and is involved in DNA damage response by regulating several cell cycle and DNA repair genes. Controls the circadian rhythm of NR0B2 expression by binding rhythmically to its promoter. Mediates the diurnal variation in the expression of GABARA1 receptor in the brain and contributes to the regulation of anxiety-like behaviors and GABAergic neurotransmission in the ventral striatum. The sequence is that of Neuronal PAS domain-containing protein 2 (NPAS2) from Homo sapiens (Human).